Reading from the N-terminus, the 205-residue chain is GTP cyclohydrolase-2 (205 aa).

49 to 53 contributes to the GTP binding site; the sequence is RIHSE. Positions 54, 65, and 67 each coordinate Zn(2+). GTP is bound by residues glutamine 70, 92–94, and threonine 114; that span reads EGR. The Proton acceptor role is filled by aspartate 126. The active-site Nucleophile is arginine 128. 2 residues coordinate GTP: threonine 149 and lysine 154.

The protein belongs to the GTP cyclohydrolase II family. Requires Zn(2+) as cofactor.

It catalyses the reaction GTP + 4 H2O = 2,5-diamino-6-hydroxy-4-(5-phosphoribosylamino)-pyrimidine + formate + 2 phosphate + 3 H(+). The protein operates within cofactor biosynthesis; riboflavin biosynthesis; 5-amino-6-(D-ribitylamino)uracil from GTP: step 1/4. In terms of biological role, catalyzes the conversion of GTP to 2,5-diamino-6-ribosylamino-4(3H)-pyrimidinone 5'-phosphate (DARP), formate and pyrophosphate. In Shewanella amazonensis (strain ATCC BAA-1098 / SB2B), this protein is GTP cyclohydrolase-2.